The chain runs to 98 residues: Protein translation factor SUI1 homolog (98 aa).

This sequence belongs to the SUI1 family.

This chain is Protein translation factor SUI1 homolog, found in Thermococcus gammatolerans (strain DSM 15229 / JCM 11827 / EJ3).